We begin with the raw amino-acid sequence, 530 residues long: Autoinducer-2 kinase (530 aa).

The protein belongs to the FGGY kinase family.

It localises to the cytoplasm. It carries out the reaction (S)-4,5-dihydroxypentane-2,3-dione + ATP = (2S)-2-hydroxy-3,4-dioxopentyl phosphate + ADP + H(+). Functionally, catalyzes the phosphorylation of autoinducer-2 (AI-2) to phospho-AI-2, which subsequently inactivates the transcriptional regulator LsrR and leads to the transcription of the lsr operon. Phosphorylates the ring-open form of (S)-4,5-dihydroxypentane-2,3-dione (DPD), which is the precursor to all AI-2 signaling molecules, at the C5 position. The protein is Autoinducer-2 kinase of Photorhabdus laumondii subsp. laumondii (strain DSM 15139 / CIP 105565 / TT01) (Photorhabdus luminescens subsp. laumondii).